We begin with the raw amino-acid sequence, 671 residues long: DNA ligase (671 aa).

NAD(+) is bound by residues 32–36 (DAEYD), 81–82 (SL), and Glu-113. The active-site N6-AMP-lysine intermediate is Lys-115. NAD(+)-binding residues include Arg-136, Glu-173, Lys-290, and Lys-314. The Zn(2+) site is built by Cys-408, Cys-411, Cys-426, and Cys-432. A BRCT domain is found at 593–671 (EIDSPFAGKT…EAEMLRLLGS (79 aa)).

It belongs to the NAD-dependent DNA ligase family. LigA subfamily. The cofactor is Mg(2+). Requires Mn(2+) as cofactor.

The enzyme catalyses NAD(+) + (deoxyribonucleotide)n-3'-hydroxyl + 5'-phospho-(deoxyribonucleotide)m = (deoxyribonucleotide)n+m + AMP + beta-nicotinamide D-nucleotide.. Functionally, DNA ligase that catalyzes the formation of phosphodiester linkages between 5'-phosphoryl and 3'-hydroxyl groups in double-stranded DNA using NAD as a coenzyme and as the energy source for the reaction. It is essential for DNA replication and repair of damaged DNA. The chain is DNA ligase from Shigella sonnei (strain Ss046).